We begin with the raw amino-acid sequence, 955 residues long: UPF0182 protein tll1193 (955 aa).

9 helical membrane-spanning segments follow: residues 6–26, 53–73, 98–118, 163–183, 186–206, 240–260, 280–300, 324–344, and 354–374; these read VVPLMPPWLRWLCGLVLAIAL, WSVQALLFLAVAGVSQLFYGC, GLGLWQLLLCAGSLNWLLIVA, WLLGLSLVAVILGLWLPVGLF, LGILLSLAMGAIASLSWPVVL, LWLVNLSVVGLGGTTLGYLLA, LQGLSAFVFATVALSFWLERY, LYGWLSASAFGVACLLAWSAI, and GPIAPGLFGFTLGYLGVILIV.

It belongs to the UPF0182 family.

It is found in the cell membrane. This Thermosynechococcus vestitus (strain NIES-2133 / IAM M-273 / BP-1) protein is UPF0182 protein tll1193.